A 397-amino-acid chain; its full sequence is Tryptophan synthase beta chain (397 aa).

Residue K87 is modified to N6-(pyridoxal phosphate)lysine.

The protein belongs to the TrpB family. In terms of assembly, tetramer of two alpha and two beta chains. The cofactor is pyridoxal 5'-phosphate.

It catalyses the reaction (1S,2R)-1-C-(indol-3-yl)glycerol 3-phosphate + L-serine = D-glyceraldehyde 3-phosphate + L-tryptophan + H2O. The protein operates within amino-acid biosynthesis; L-tryptophan biosynthesis; L-tryptophan from chorismate: step 5/5. Functionally, the beta subunit is responsible for the synthesis of L-tryptophan from indole and L-serine. This chain is Tryptophan synthase beta chain, found in Salmonella agona (strain SL483).